The following is a 314-amino-acid chain: Thymidylate synthase (314 aa).

Residues arginine 21 and 176–177 (RR) each bind dUMP. Catalysis depends on cysteine 196, which acts as the Nucleophile. Residues 216–219 (RSAD), asparagine 227, and 257–259 (HLY) each bind dUMP. Position 219 (aspartate 219) interacts with (6R)-5,10-methylene-5,6,7,8-tetrahydrofolate. Serine 313 lines the (6R)-5,10-methylene-5,6,7,8-tetrahydrofolate pocket.

The protein belongs to the thymidylate synthase family. Bacterial-type ThyA subfamily. In terms of assembly, homodimer.

It is found in the cytoplasm. The enzyme catalyses dUMP + (6R)-5,10-methylene-5,6,7,8-tetrahydrofolate = 7,8-dihydrofolate + dTMP. It participates in pyrimidine metabolism; dTTP biosynthesis. Catalyzes the reductive methylation of 2'-deoxyuridine-5'-monophosphate (dUMP) to 2'-deoxythymidine-5'-monophosphate (dTMP) while utilizing 5,10-methylenetetrahydrofolate (mTHF) as the methyl donor and reductant in the reaction, yielding dihydrofolate (DHF) as a by-product. This enzymatic reaction provides an intracellular de novo source of dTMP, an essential precursor for DNA biosynthesis. The protein is Thymidylate synthase of Listeria monocytogenes serotype 4b (strain CLIP80459).